The following is a 137-amino-acid chain: Neutral phospholipase A2 ammodytin I2 (137 aa).

Positions Met-1–Gly-16 are cleaved as a signal peptide. Intrachain disulfides connect Cys-42/Cys-131, Cys-44/Cys-60, Cys-59/Cys-111, Cys-65/Cys-137, Cys-66/Cys-104, Cys-73/Cys-97, and Cys-91/Cys-102. Positions 43, 45, and 47 each coordinate Ca(2+). The active site involves His-63. Residue Asp-64 participates in Ca(2+) binding. The active site involves Asp-105.

The protein belongs to the phospholipase A2 family. Group II subfamily. D49 sub-subfamily. Requires Ca(2+) as cofactor. In terms of tissue distribution, expressed by the venom gland.

The protein resides in the secreted. The catalysed reaction is a 1,2-diacyl-sn-glycero-3-phosphocholine + H2O = a 1-acyl-sn-glycero-3-phosphocholine + a fatty acid + H(+). Functionally, snake venom phospholipase A2 (PLA2) that has enzymatic activity but is non-toxic. Displays low binding affinity and enzymatic activity on phosphatidylserine-containing vesicles and HEK-293 plasma membranes, in contrast to ammodytoxins that have high activity on these phospholipids. PLA2 catalyzes the calcium-dependent hydrolysis of the 2-acyl groups in 3-sn-phosphoglycerides. In Vipera ammodytes ammodytes (Western sand viper), this protein is Neutral phospholipase A2 ammodytin I2.